The following is a 203-amino-acid chain: MMDESLVELATYLKNKLGNKLEETVFAFGELTIVARLDAITDVLMFVRDDSHCQFINLTDISGVDYPSRDKRFDVSYQLLSPRENLRLRVKVRTDENTPVASACTVYPGAEWYERETYDMYGILFSGHPDLRRILTDYGFEGYPLRKDFPVTGFVECRYDNEAKRVIYEPVVLRQEMRNFDFLSPWEGGQYVLPCDGKEDEKK.

Belongs to the complex I 30 kDa subunit family. NDH-1 is composed of 14 different subunits. Subunits NuoB, C, D, E, F, and G constitute the peripheral sector of the complex.

Its subcellular location is the cell inner membrane. It carries out the reaction a quinone + NADH + 5 H(+)(in) = a quinol + NAD(+) + 4 H(+)(out). Functionally, NDH-1 shuttles electrons from NADH, via FMN and iron-sulfur (Fe-S) centers, to quinones in the respiratory chain. The immediate electron acceptor for the enzyme in this species is believed to be ubiquinone. Couples the redox reaction to proton translocation (for every two electrons transferred, four hydrogen ions are translocated across the cytoplasmic membrane), and thus conserves the redox energy in a proton gradient. The protein is NADH-quinone oxidoreductase subunit C of Bartonella tribocorum (strain CIP 105476 / IBS 506).